A 49-amino-acid chain; its full sequence is Lysozyme C (49 aa).

A C-type lysozyme domain is found at 1–49 (SKMKKCEFAKIAKEQHMDGYHGVSLADWVCLVNNESDFNTKAINRNKGI). Residue Glu35 is part of the active site.

It belongs to the glycosyl hydrolase 22 family. Monomer.

The protein resides in the secreted. It catalyses the reaction Hydrolysis of (1-&gt;4)-beta-linkages between N-acetylmuramic acid and N-acetyl-D-glucosamine residues in a peptidoglycan and between N-acetyl-D-glucosamine residues in chitodextrins.. In terms of biological role, lysozymes have primarily a bacteriolytic function; those in tissues and body fluids are associated with the monocyte-macrophage system and enhance the activity of immunoagents. The sequence is that of Lysozyme C (LYZ) from Pseudocheirus peregrinus (Common ring-tailed possum).